The following is a 311-amino-acid chain: Aspartate carbamoyltransferase catalytic subunit (311 aa).

2 residues coordinate carbamoyl phosphate: Arg55 and Thr56. Lys85 contacts L-aspartate. Residues Arg106, His135, and Gln138 each coordinate carbamoyl phosphate. Residues Arg168 and Arg230 each contribute to the L-aspartate site. Leu268 and Pro269 together coordinate carbamoyl phosphate.

It belongs to the aspartate/ornithine carbamoyltransferase superfamily. ATCase family. Heterododecamer (2C3:3R2) of six catalytic PyrB chains organized as two trimers (C3), and six regulatory PyrI chains organized as three dimers (R2).

It catalyses the reaction carbamoyl phosphate + L-aspartate = N-carbamoyl-L-aspartate + phosphate + H(+). It participates in pyrimidine metabolism; UMP biosynthesis via de novo pathway; (S)-dihydroorotate from bicarbonate: step 2/3. In terms of biological role, catalyzes the condensation of carbamoyl phosphate and aspartate to form carbamoyl aspartate and inorganic phosphate, the committed step in the de novo pyrimidine nucleotide biosynthesis pathway. The sequence is that of Aspartate carbamoyltransferase catalytic subunit from Klebsiella pneumoniae (strain 342).